Consider the following 570-residue polypeptide: Urease subunit alpha (570 aa).

Positions 131–570 constitute a Urease domain; that stretch reads GGFDAHIHFI…LPMAQRYFLF (440 aa). The Ni(2+) site is built by His-136, His-138, and Lys-219. The residue at position 219 (Lys-219) is an N6-carboxylysine. His-221 is a binding site for substrate. Positions 248 and 274 each coordinate Ni(2+). His-322 acts as the Proton donor in catalysis. Asp-362 is a Ni(2+) binding site.

Belongs to the metallo-dependent hydrolases superfamily. Urease alpha subunit family. As to quaternary structure, heterotrimer of UreA (gamma), UreB (beta) and UreC (alpha) subunits. Three heterotrimers associate to form the active enzyme. It depends on Ni cation as a cofactor. Post-translationally, carboxylation allows a single lysine to coordinate two nickel ions.

It localises to the cytoplasm. It catalyses the reaction urea + 2 H2O + H(+) = hydrogencarbonate + 2 NH4(+). It participates in nitrogen metabolism; urea degradation; CO(2) and NH(3) from urea (urease route): step 1/1. The chain is Urease subunit alpha from Mesorhizobium japonicum (strain LMG 29417 / CECT 9101 / MAFF 303099) (Mesorhizobium loti (strain MAFF 303099)).